The sequence spans 649 residues: DNA ligase (649 aa).

NAD(+)-binding positions include Asp-62–Asp-66 and Ser-104–Thr-105. Lys-142 functions as the N6-AMP-lysine intermediate in the catalytic mechanism. Residues Arg-158, Glu-189, and Lys-301 each contribute to the NAD(+) site. Zn(2+) is bound by residues Cys-389, Cys-392, Cys-405, and Cys-411. The BRCT domain maps to Pro-569–Tyr-649.

It belongs to the NAD-dependent DNA ligase family. LigA subfamily. Requires Mg(2+) as cofactor. It depends on Mn(2+) as a cofactor.

The catalysed reaction is NAD(+) + (deoxyribonucleotide)n-3'-hydroxyl + 5'-phospho-(deoxyribonucleotide)m = (deoxyribonucleotide)n+m + AMP + beta-nicotinamide D-nucleotide.. In terms of biological role, DNA ligase that catalyzes the formation of phosphodiester linkages between 5'-phosphoryl and 3'-hydroxyl groups in double-stranded DNA using NAD as a coenzyme and as the energy source for the reaction. It is essential for DNA replication and repair of damaged DNA. In Psychromonas ingrahamii (strain DSM 17664 / CCUG 51855 / 37), this protein is DNA ligase.